A 65-amino-acid chain; its full sequence is Kappa-scoloptoxin(04)-Ssd1a (65 aa).

Positions 1 to 24 (MKKTCVVSVFLVLLLLKFHDLSMG) are cleaved as a signal peptide. Positions 25–36 (EEISPLKKVAPR) are excised as a propeptide. 2 disulfide bridges follow: Cys42/Cys53 and Cys47/Cys60.

As to expression, expressed by the venom gland.

Its subcellular location is the secreted. In terms of biological role, voltage-gated potassium channel inhibitor. This Scolopendra dehaani (Thai centipede) protein is Kappa-scoloptoxin(04)-Ssd1a.